Reading from the N-terminus, the 382-residue chain is tRNA-specific 2-thiouridylase MnmA (382 aa).

ATP is bound by residues 34-41 (AMSGGVDS) and Leu-60. Catalysis depends on Cys-128, which acts as the Nucleophile. Cys-128 and Cys-224 are oxidised to a cystine. Gly-152 is an ATP binding site. Residues 174-176 (RDQ) are interaction with tRNA. Cys-224 serves as the catalytic Cysteine persulfide intermediate.

This sequence belongs to the MnmA/TRMU family.

It is found in the cytoplasm. The catalysed reaction is S-sulfanyl-L-cysteinyl-[protein] + uridine(34) in tRNA + AH2 + ATP = 2-thiouridine(34) in tRNA + L-cysteinyl-[protein] + A + AMP + diphosphate + H(+). In terms of biological role, catalyzes the 2-thiolation of uridine at the wobble position (U34) of tRNA, leading to the formation of s(2)U34. The protein is tRNA-specific 2-thiouridylase MnmA of Sphingopyxis alaskensis (strain DSM 13593 / LMG 18877 / RB2256) (Sphingomonas alaskensis).